A 619-amino-acid polypeptide reads, in one-letter code: Translation initiation factor IF-2 (619 aa).

Low complexity-rich tracts occupy residues 1–18 (MTLNKKTNNENSSKTTPK) and 98–111 (PPQLQPQTPSLTKT). 2 disordered regions span residues 1–24 (MTLNKKTNNENSSKTTPKLSKETD) and 90–113 (SEPQEKHTPPQLQPQTPSLTKTKP). The tr-type G domain maps to 121-289 (KKSPIVTIMG…ILLVSEIQNL (169 aa)). Positions 130 to 137 (GHVDHGKT) are G1. Residue 130-137 (GHVDHGKT) coordinates GTP. Positions 155-159 (GITQH) are G2. The segment at 176–179 (DTPG) is G3. GTP contacts are provided by residues 176–180 (DTPGH) and 230–233 (NKID). Residues 230 to 233 (NKID) form a G4 region. The interval 266–268 (SAL) is G5.

This sequence belongs to the TRAFAC class translation factor GTPase superfamily. Classic translation factor GTPase family. IF-2 subfamily.

Its subcellular location is the cytoplasm. Functionally, one of the essential components for the initiation of protein synthesis. Protects formylmethionyl-tRNA from spontaneous hydrolysis and promotes its binding to the 30S ribosomal subunits. Also involved in the hydrolysis of GTP during the formation of the 70S ribosomal complex. This is Translation initiation factor IF-2 from Onion yellows phytoplasma (strain OY-M).